Here is a 184-residue protein sequence, read N- to C-terminus: NADH-quinone oxidoreductase subunit B 1 (184 aa).

[4Fe-4S] cluster-binding residues include Cys37, Cys38, Cys103, and Cys132.

The protein belongs to the complex I 20 kDa subunit family. As to quaternary structure, NDH-1 is composed of 14 different subunits. Subunits NuoB, C, D, E, F, and G constitute the peripheral sector of the complex. It depends on [4Fe-4S] cluster as a cofactor.

The protein localises to the cell membrane. The catalysed reaction is a quinone + NADH + 5 H(+)(in) = a quinol + NAD(+) + 4 H(+)(out). Its function is as follows. NDH-1 shuttles electrons from NADH, via FMN and iron-sulfur (Fe-S) centers, to quinones in the respiratory chain. The immediate electron acceptor for the enzyme in this species is believed to be a menaquinone. Couples the redox reaction to proton translocation (for every two electrons transferred, four hydrogen ions are translocated across the cytoplasmic membrane), and thus conserves the redox energy in a proton gradient. In Streptomyces coelicolor (strain ATCC BAA-471 / A3(2) / M145), this protein is NADH-quinone oxidoreductase subunit B 1.